The following is a 294-amino-acid chain: GTPase Era (294 aa).

The region spanning K3–E170 is the Era-type G domain. The interval G11 to S18 is G1. G11–S18 contacts GTP. The segment at Q37–N41 is G2. Residues D58–G61 form a G3 region. GTP is bound by residues D58–I62 and N120–D123. Residues N120 to D123 are G4. Residues I149–A151 are G5. One can recognise a KH type-2 domain in the interval L201–K278.

This sequence belongs to the TRAFAC class TrmE-Era-EngA-EngB-Septin-like GTPase superfamily. Era GTPase family. As to quaternary structure, monomer.

The protein resides in the cytoplasm. It is found in the cell membrane. In terms of biological role, an essential GTPase that binds both GDP and GTP, with rapid nucleotide exchange. Plays a role in 16S rRNA processing and 30S ribosomal subunit biogenesis and possibly also in cell cycle regulation and energy metabolism. The protein is GTPase Era of Clostridium novyi (strain NT).